The sequence spans 642 residues: Fimbrin (642 aa).

EF-hand domains follow at residues Glu-16–Asp-50 and Ala-51–Ser-86. Ca(2+)-binding residues include Asp-29, Asp-31, Trp-35, Asp-66, Ser-68, Arg-70, and Asp-75. 2 actin-binding regions span residues Ile-125 to Pro-394 and Ile-395 to Lys-642. 4 Calponin-homology (CH) domains span residues Glu-139 to Leu-259, Leu-287 to Pro-390, Glu-411 to Ile-521, and Asp-534 to Lys-642.

Functionally, binds to actin, and functionally associates with actin structures involved in the development and maintenance of cell polarity. The polypeptide is Fimbrin (SAC6) (Saccharomyces cerevisiae (strain ATCC 204508 / S288c) (Baker's yeast)).